The following is a 629-amino-acid chain: Ras GTPase-activating protein gap-1 (629 aa).

Residues 183–398 (DRIRPVLSSL…SVMASFLDNI (216 aa)) form the Ras-GAP domain. Residues 411-507 (TVFKFGNLQQ…WLNAIERQRN (97 aa)) form the PH domain.

It localises to the cytoplasm. In terms of biological role, GTPase-activating protein, which inhibits the vulval induction by acting as a negative regulator for the member of the Ras family let-60. Probably decreases the signaling activity of Ras by stimulating its intrinsic GTPase activity, thereby lowering the levels of GTP-bound, active Ras. The sequence is that of Ras GTPase-activating protein gap-1 (gap-1) from Caenorhabditis elegans.